The chain runs to 797 residues: Kinesin-like protein KIF18B (797 aa).

Positions 11–352 (TVAVVVRVRP…LKYANRAKEI (342 aa)) constitute a Kinesin motor domain. An ATP-binding site is contributed by 110–117 (GATGAGKT). A coiled-coil region spans residues 367–402 (ISKYATICEQLKTEVADLQAKLRAYEDAARDAGKQI). Disordered regions lie at residues 412–476 (EEAV…PNRL), 528–564 (AAVSPQPTDTSGAPPALRTQRGCDASPSTLSAEPSVP), 579–640 (LSSP…KEPQ), and 730–797 (KGSS…SGPR). Polar residues predominate over residues 594-608 (MSNTSRLETPHSLNT). The segment covering 731-744 (GSSIPKPSSISKGS) has biased composition (low complexity).

Belongs to the TRAFAC class myosin-kinesin ATPase superfamily. Kinesin family.

The protein localises to the nucleus. It localises to the cytoplasm. It is found in the cytoskeleton. Functionally, may play an important role in microtubule plus-end depolymerizing activity in mitotic cells. This chain is Kinesin-like protein KIF18B (KIF18B), found in Gallus gallus (Chicken).